Here is a 293-residue protein sequence, read N- to C-terminus: Protease HtpX (293 aa).

The next 2 helical transmembrane spans lie at 4–24 (IALF…ILSL) and 32–52 (VMGL…VSLL). Zn(2+) is bound at residue His139. Glu140 is an active-site residue. Residue His143 participates in Zn(2+) binding. A run of 2 helical transmembrane segments spans residues 158-178 (IVNT…AGFM) and 193-213 (MVYF…ASTI). Residue Glu222 coordinates Zn(2+).

Belongs to the peptidase M48B family. Zn(2+) serves as cofactor.

It is found in the cell inner membrane. This Erwinia tasmaniensis (strain DSM 17950 / CFBP 7177 / CIP 109463 / NCPPB 4357 / Et1/99) protein is Protease HtpX.